The chain runs to 413 residues: Cell surface GPI-anchored protein ECM33 (413 aa).

A signal peptide spans 1 to 20 (MQIKSFLLPIVAALLTSVSA). 11 N-linked (GlcNAc...) asparagine glycosylation sites follow: Asn93, Asn102, Asn172, Asn209, Asn222, Asn227, Asn279, Asn290, Asn306, Asn322, and Asn382. A disordered region spans residues 347 to 390 (YVCTHPANPSSSSKSGSSTQTGKSDSKSSDGSSSSNSSSSSKKG). Residues 356–390 (SSSSKSGSSTQTGKSDSKSSDGSSSSNSSSSSKKG) are compositionally biased toward low complexity. Gly390 carries the GPI-anchor amidated glycine lipid modification. A propeptide spans 391 to 413 (ASNVLVVPGMVLTTALGVLLALI) (removed in mature form).

This sequence belongs to the SPS2 family.

Its subcellular location is the cell membrane. The protein resides in the secreted. It localises to the cell wall. Functionally, cell surface protein required for proper cell wall integrity and for the correct assembly of the mannoprotein outer layer of the cell wall. The sequence is that of Cell surface GPI-anchored protein ECM33 (ECM331) from Candida albicans (strain SC5314 / ATCC MYA-2876) (Yeast).